Reading from the N-terminus, the 304-residue chain is ATP synthase gamma chain (304 aa).

This sequence belongs to the ATPase gamma chain family. F-type ATPases have 2 components, CF(1) - the catalytic core - and CF(0) - the membrane proton channel. CF(1) has five subunits: alpha(3), beta(3), gamma(1), delta(1), epsilon(1). CF(0) has three main subunits: a, b and c.

The protein resides in the cell membrane. Produces ATP from ADP in the presence of a proton gradient across the membrane. The gamma chain is believed to be important in regulating ATPase activity and the flow of protons through the CF(0) complex. This Chloroherpeton thalassium (strain ATCC 35110 / GB-78) protein is ATP synthase gamma chain.